The chain runs to 710 residues: Choline transporter-like protein 5 (710 aa).

The segment at Met1 to Phe21 is disordered. Over Met1–Asp32 the chain is Cytoplasmic. The helical transmembrane segment at Val33–Ala53 threads the bilayer. At Trp54–Trp236 the chain is on the extracellular side. N-linked (GlcNAc...) asparagine glycosylation is found at Asn82 and Asn184. A helical transmembrane segment spans residues Lys237–Leu257. Topologically, residues Arg258–Thr260 are cytoplasmic. A helical transmembrane segment spans residues Ala261–Trp281. Over Tyr282–Trp319 the chain is Extracellular. A helical transmembrane segment spans residues Phe320–Leu340. Over Arg341 to Gln345 the chain is Cytoplasmic. Residues Val346–Ile366 traverse the membrane as a helical segment. The Extracellular segment spans residues Tyr367–Pro368. Residues Val369–Leu389 form a helical membrane-spanning segment. Over Ala390–Asn454 the chain is Cytoplasmic. A helical membrane pass occupies residues Leu455–Gly475. Residues Ala476–Ser509 are Extracellular-facing. A helical transmembrane segment spans residues Leu510 to Leu530. Topologically, residues Asp531–Tyr604 are cytoplasmic. The helical transmembrane segment at Phe605–Leu625 threads the bilayer. Residues Phe626–Tyr643 are Extracellular-facing. The helical transmembrane segment at Trp644–Val664 threads the bilayer. The Cytoplasmic portion of the chain corresponds to Tyr665–Gln710.

This sequence belongs to the CTL (choline transporter-like) family.

Its subcellular location is the cell membrane. The catalysed reaction is choline(out) + n H(+)(in) = choline(in) + n H(+)(out). In terms of biological role, choline/H+ antiporter. This is Choline transporter-like protein 5 (Slc44a5) from Mus musculus (Mouse).